We begin with the raw amino-acid sequence, 4545 residues long: Prolow-density lipoprotein receptor-related protein 1 (4545 aa).

An N-terminal signal peptide occupies residues 1–19 (MLTPPLLLLLPLLSALVAG). Residues 20–4424 (ATMDAPKTCS…SQQQPGHMTS (4405 aa)) lie on the Extracellular side of the membrane. 2 consecutive LDL-receptor class A domains span residues 27-66 (TCSP…EICP) and 72-110 (RCPP…AHCR). 6 cysteine pairs are disulfide-bonded: C28–C41, C35–C54, C48–C65, C73–C86, C80–C99, and C93–C109. N-linked (GlcNAc...) asparagine glycans are attached at residues N115, N137, N186, N240, and N275. 3 LDL-receptor class B repeats span residues 293–335 (GNFY…DPAM), 336–379 (GKVF…DLVS), and 380–423 (RLVY…FENY). N-linked (GlcNAc...) asparagine glycosylation occurs at N358. N-linked (GlcNAc...) asparagine glycosylation is present at N447. LDL-receptor class B repeat units follow at residues 572–614 (GFIY…DWMG), 615–660 (DNLY…DPLN), 661–711 (GWMY…DIPA), and 712–755 (GRLY…HGNY). The stretch at 639 to 671 (TRKTLIEGKMTHPRAIVVDPLNGWMYWTDWEED) is one HAT 1 repeat. N730 carries N-linked (GlcNAc...) asparagine glycosylation. LDL-receptor class A domains follow at residues 854–892 (QCQP…ALCH), 895–933 (TCPS…ATCS), 936–973 (TCPP…ASCA), 976–1013 (TCFP…AGCS), 1015–1053 (SCSS…ANCT), 1062–1099 (GCHS…KGCE), 1104–1142 (VCDP…ENCE), and 1145–1184 (ACRP…ELCD). 24 disulfides stabilise this stretch: C855/C867, C862/C880, C874/C891, C896/C908, C903/C921, C915/C932, C937/C949, C944/C962, C956/C972, C977/C990, C985/C1003, C997/C1012, C1016/C1028, C1023/C1041, C1035/C1052, C1063/C1076, C1070/C1089, C1083/C1098, C1105/C1119, C1113/C1132, C1126/C1141, C1146/C1160, C1153/C1173, and C1167/C1183. 6 residues coordinate Ca(2+): W872, D875, D877, D879, D885, and E886. The N-linked (GlcNAc...) asparagine glycan is linked to N929. Ca(2+) is bound by residues W1033, D1036, D1038, D1040, D1046, and E1047. N1051 carries an N-linked (GlcNAc...) asparagine glycan. Residues W1081, D1084, D1086, D1088, D1094, and E1095 each contribute to the Ca(2+) site. A glycan (N-linked (GlcNAc...) asparagine) is linked at N1156. 2 N-linked (GlcNAc...) asparagine glycosylation sites follow: N1196 and N1219. 5 LDL-receptor class B repeats span residues 1310–1356 (SALY…DWIA), 1357–1399 (GNIY…DPRD), 1400–1446 (GILF…DYLE), 1447–1491 (KRIL…YGGE), and 1492–1532 (VYWT…YHPS). 2 HAT repeats span residues 1380 to 1413 (TTLL…SLPR) and 1470 to 1503 (MEVL…NTLA). N-linked (GlcNAc...) asparagine glycosylation is found at N1512, N1559, N1576, N1617, and N1646. LDL-receptor class B repeat units lie at residues 1628–1670 (QRVY…DWVS), 1671–1714 (RNLF…HPLR), 1715–1754 (GKLY…DFPE), and 1755–1799 (SKLY…MGDK). Residues 1653 to 1684 (VVSADLPNAHGLAVDWVSRNLFWTSYDTNKKQ) form an HAT 4 repeat. Residues N1724, N1734, N1764, N1826, and N1934 are each glycosylated (N-linked (GlcNAc...) asparagine). 4 LDL-receptor class B repeats span residues 1935 to 1977 (DTIY…DWIA), 1978 to 2020 (GNIY…HPEK), 2021 to 2064 (GYLF…DYQG), and 2065 to 2108 (GKLY…FEDF). The N-linked (GlcNAc...) asparagine glycan is linked to N1996. K2010 is modified (N6-acetyllysine). N2049 carries N-linked (GlcNAc...) asparagine glycosylation. N2118 and N2128 each carry an N-linked (GlcNAc...) asparagine glycan. LDL-receptor class B repeat units lie at residues 2254-2295 (NRIF…HRGW), 2296-2344 (DTLY…DECQ), 2345-2389 (NLMF…DHRA), 2390-2432 (EKLY…YGEH), and 2433-2474 (IFWT…VAND). 3 HAT repeats span residues 2277–2309 (TTIV…STIT), 2325–2358 (TVIT…LHPS), and 2411–2444 (HRYV…RAVQ). N-linked (GlcNAc...) asparagine glycosylation is found at N2473, N2503, and N2522. 7 LDL-receptor class A domains span residues 2524 to 2563 (SCRA…SYCN), 2566 to 2602 (RCKK…IPCN), 2605 to 2641 (ACGV…MNCS), 2639 to 2690 (NCSA…RDCP), 2696 to 2732 (RCPL…THCN), 2734 to 2771 (FCSE…AHCE), and 2774 to 2814 (TCGP…AGCL). Cystine bridges form between C2525-C2538, C2533-C2551, C2545-C2562, C2567-C2579, C2574-C2592, and C2586-C2601. An N-linked (GlcNAc...) asparagine glycan is attached at N2602. Intrachain disulfides connect C2606/C2618, C2613/C2631, C2625/C2640, C2640/C2667, C2645/C2680, C2674/C2689, C2697/C2709, C2704/C2722, C2716/C2731, C2735/C2747, C2742/C2760, C2754/C2770, C2775/C2788, C2782/C2801, and C2795/C2813. N-linked (GlcNAc...) asparagine glycosylation is found at N2621 and N2639. N2816 carries N-linked (GlcNAc...) asparagine glycosylation. LDL-receptor class A domains lie at 2818-2855 (TCDD…PECE), 2858-2899 (TCGP…PHCT), and 2904-2941 (KCNA…RGCH). Intrachain disulfides connect C2819–C2831, C2826–C2844, C2838–C2854, C2859–C2871, C2866–C2885, C2879–C2898, C2905–C2918, C2913–C2931, C2925–C2940, C2987–C2997, and C2993–C3006. An N-linked (GlcNAc...) asparagine glycan is attached at N2906. In terms of domain architecture, EGF-like 1; calcium-binding spans 2983–3018 (DVDECSTTFPCSQLCINTHGSYKCLCVEGYAPRGGD). N-linked (GlcNAc...) asparagine glycosylation is found at N3049 and N3090. LDL-receptor class B repeat units follow at residues 3070–3114 (QMIY…DWVG), 3115–3157 (GNLY…DVQN), 3158–3201 (GYLY…DYVT), 3202–3244 (ERIY…FEDY), and 3245–3285 (VYWT…FHAL). HAT repeat units follow at residues 3128–3171 (EVSK…HSLI) and 3224–3256 (RHVV…KSIN). Residues N3265 and N3334 are each glycosylated (N-linked (GlcNAc...) asparagine). 11 consecutive LDL-receptor class A domains span residues 3334–3371 (NCTA…PDCP), 3374–3410 (KCRP…ANCD), 3413–3450 (VCLP…RDCP), 3453–3491 (TCAP…ANCT), 3494–3533 (TCGV…EECD), 3536–3572 (TCEP…ESCT), 3575–3611 (PCSE…KDCT), 3613–3649 (RCDM…EACG), 3654–3692 (TCPL…EECT), 3695–3733 (QCPP…EDCE), and 3741–3778 (HCKD…EDCS). 33 disulfides stabilise this stretch: C3335/C3347, C3342/C3360, C3354/C3370, C3375/C3387, C3382/C3400, C3394/C3409, C3414/C3427, C3421/C3440, C3434/C3449, C3454/C3467, C3461/C3480, C3474/C3490, C3495/C3508, C3502/C3521, C3515/C3532, C3537/C3549, C3544/C3562, C3556/C3571, C3576/C3588, C3583/C3601, C3595/C3610, C3614/C3626, C3621/C3639, C3633/C3648, C3655/C3667, C3662/C3680, C3674/C3691, C3696/C3710, C3704/C3723, C3717/C3732, C3742/C3755, C3750/C3768, and C3762/C3777. N-linked (GlcNAc...) asparagine glycosylation is present at N3489. A glycan (N-linked (GlcNAc...) asparagine) is linked at N3663. 2 N-linked (GlcNAc...) asparagine glycosylation sites follow: N3789 and N3840. Residues 3913–3925 (GRVYWTNWHTGTI) form an LDL-receptor class B 31 repeat. N3954 is a glycosylation site (N-linked (GlcNAc...) asparagine). LDL-receptor class B repeat units lie at residues 3971–4013 (GNVY…DPLR), 4014–4057 (GTMY…DYHN), and 4058–4102 (ERLY…FEDY). Residues 3995–4027 (TLISGMIDEPHAIVVDPLRGTMYWSDWGNHPKI) form an HAT 10 repeat. N-linked (GlcNAc...) asparagine glycosylation is found at N4076, N4126, and N4180. EGF-like domains lie at 4197-4230 (RPGT…YTGD), 4233-4269 (ELDQ…PRCT), 4270-4302 (QQVC…FLGD), and 4305-4341 (QYRQ…TRCE). Cystine bridges form between C4201–C4211, C4205–C4221, C4237–C4247, C4241–C4257, C4259–C4268, C4273–C4283, C4277–C4293, C4309–C4319, C4313–C4329, and C4331–C4340. N4280 carries an N-linked (GlcNAc...) asparagine glycan. N-linked (GlcNAc...) asparagine glycosylation is present at N4365. The region spanning 4376–4410 (LTCIDHCSNGGSCTMNSKMMPECQCPPHMTGPRCE) is the EGF-like 6 domain. 3 cysteine pairs are disulfide-bonded: C4378–C4388, C4382–C4398, and C4400–C4409. A helical membrane pass occupies residues 4425 to 4445 (ILIPLLLLLLLLLVAGVVFWY). Topologically, residues 4446–4545 (KRRVRGAKGF…PEDEIGDPLA (100 aa)) are cytoplasmic. The tract at residues 4446–4545 (KRRVRGAKGF…PEDEIGDPLA (100 aa)) is interaction with MAFB. Position 4461 is a phosphothreonine (T4461). Y4508 carries the post-translational modification Phosphotyrosine. Residues S4518, S4521, and S4524 each carry the phosphoserine modification.

This sequence belongs to the LDLR family. In terms of assembly, heterodimer of an 85-kDa membrane-bound carboxyl subunit and a non-covalently attached 515-kDa N-terminal subunit. Intracellular domain interacts with MAFB. Found in a complex with PID1/PCLI1, LRP1 and CUBNI. Interacts with SNX17, PID1/PCLI1, PDGF and CUBN. The intracellular domain interacts with SHC1, GULP1 and DAB1. Can weakly interact (via NPXY motif) with DAB2 (via PID domain); the interaction is enhanced by tyrosine phosphorylation of the NPXY motif. Interacts with MDK; promotes neuronal survival. Interacts with LRPAP1; this interaction is followed by rapid internalization. Interacts with uPA/PLAU and PAI1/SERPINE1, either individually or in complex with each other, leading to rapid endocytosis; this interaction is abolished in the presence of LRPAP1/RAP. Also interacts with tPA/PLAT alone or in complex with SERPINE1. Interacts with the urokinase receptor PLAUR; this interaction leads to PLAUR internalization and is impaired in the presence of SORL1. Interacts with PDGFB. Interacts with TAU/MAPT, leading to endocytosis; this interaction is reduced in the presence of LRPAP1/RAP. Interacts with IGFBP3. Interacts with ADGRG6. Post-translationally, cleaved into a 85 kDa membrane-spanning subunit (LRP-85) and a 515 kDa large extracellular domain (LRP-515) that remains non-covalently associated. Gamma-secretase-dependent cleavage of LRP-85 releases the intracellular domain from the membrane. In terms of processing, phosphorylated on serine and threonine residues. Phosphorylated on tyrosine residues upon stimulation with PDGF. Tyrosine phosphorylation promotes interaction with SHC1.

It localises to the cell membrane. It is found in the membrane. The protein localises to the coated pit. The protein resides in the golgi outpost. Its subcellular location is the cytoplasm. It localises to the cytoskeleton. It is found in the microtubule organizing center. The protein localises to the nucleus. In terms of biological role, endocytic receptor involved in endocytosis and in phagocytosis of apoptotic cells. Required for early embryonic development. Involved in cellular lipid homeostasis. Involved in the plasma clearance of chylomicron remnants and activated LRPAP1 (alpha 2-macroglobulin), as well as the local metabolism of complexes between plasminogen activators and their endogenous inhibitors. Acts as an LRPAP1 alpha-2-macroglobulin receptor. Acts as a TAU/MAPT receptor and controls the endocytosis of TAU/MAPT as well as its subsequent spread. May modulate cellular events, such as APP metabolism, kinase-dependent intracellular signaling, neuronal calcium signaling as well as neurotransmission. Also acts as a receptor for IGFBP3 to mediate cell growth inhibition. This Rattus norvegicus (Rat) protein is Prolow-density lipoprotein receptor-related protein 1.